Reading from the N-terminus, the 248-residue chain is Ribonuclease PH (248 aa).

Residues R86 and 124-126 contribute to the phosphate site; that span reads GTR.

This sequence belongs to the RNase PH family. In terms of assembly, homohexameric ring arranged as a trimer of dimers.

It catalyses the reaction tRNA(n+1) + phosphate = tRNA(n) + a ribonucleoside 5'-diphosphate. Phosphorolytic 3'-5' exoribonuclease that plays an important role in tRNA 3'-end maturation. Removes nucleotide residues following the 3'-CCA terminus of tRNAs; can also add nucleotides to the ends of RNA molecules by using nucleoside diphosphates as substrates, but this may not be physiologically important. Probably plays a role in initiation of 16S rRNA degradation (leading to ribosome degradation) during starvation. The polypeptide is Ribonuclease PH (Clostridium perfringens (strain 13 / Type A)).